Consider the following 441-residue polypeptide: Serine carboxypeptidase-like 3 (441 aa).

Positions 1-30 are cleaved as a signal peptide; that stretch reads MASNYVFSVLRSLLLLIHTVFLGQHHVSSA. 3 disulfides stabilise this stretch: Cys88/Cys331, Cys252/Cys266, and Cys290/Cys297. Asn109 carries an N-linked (GlcNAc...) asparagine glycan. The active site involves Ser184. An N-linked (GlcNAc...) asparagine glycan is attached at Asn350. Asp366 is a catalytic residue. Asn382 is a glycosylation site (N-linked (GlcNAc...) asparagine). His419 is a catalytic residue.

The protein belongs to the peptidase S10 family. As to expression, expressed in roots.

It is found in the secreted. In terms of biological role, probable carboxypeptidase. The sequence is that of Serine carboxypeptidase-like 3 (SCPL3) from Arabidopsis thaliana (Mouse-ear cress).